Reading from the N-terminus, the 190-residue chain is UPF0301 protein RSc0675 (190 aa).

The protein belongs to the UPF0301 (AlgH) family.

This chain is UPF0301 protein RSc0675, found in Ralstonia nicotianae (strain ATCC BAA-1114 / GMI1000) (Ralstonia solanacearum).